A 249-amino-acid chain; its full sequence is Putative nicotinamide mononucleotide adenylyltransferase (249 aa).

NAD(+)-binding residues include Ser-40 and Phe-41. His-48 provides a ligand contact to ATP. 5 residues coordinate NAD(+): Thr-97, Gly-129, Asp-131, Arg-165, and Asn-206. An ATP-binding site is contributed by 214–217; it reads TRAR.

It belongs to the eukaryotic NMN adenylyltransferase family. POF1 subfamily.

The protein localises to the cytoplasm. Its subcellular location is the nucleus. It carries out the reaction beta-nicotinamide D-ribonucleotide + ATP + H(+) = diphosphate + NAD(+). It participates in cofactor biosynthesis; NAD(+) biosynthesis; NAD(+) from nicotinamide D-ribonucleotide: step 1/1. In terms of biological role, catalyzes the formation of NAD(+) from nicotinamide mononucleotide (NMN) and ATP. Involved in the salvage pathway for NAD(+) biosynthesis via NMN. This Schizosaccharomyces pombe (strain 972 / ATCC 24843) (Fission yeast) protein is Putative nicotinamide mononucleotide adenylyltransferase.